The chain runs to 542 residues: Chaperonin GroEL 1 (542 aa).

Residues 29-32 (TLGP), 86-90 (DGTTT), Gly-413, 477-479 (NAA), and Asp-493 each bind ATP.

This sequence belongs to the chaperonin (HSP60) family. Forms a cylinder of 14 subunits composed of two heptameric rings stacked back-to-back. Interacts with the co-chaperonin GroES.

The protein resides in the cytoplasm. It catalyses the reaction ATP + H2O + a folded polypeptide = ADP + phosphate + an unfolded polypeptide.. Functionally, together with its co-chaperonin GroES, plays an essential role in assisting protein folding. The GroEL-GroES system forms a nano-cage that allows encapsulation of the non-native substrate proteins and provides a physical environment optimized to promote and accelerate protein folding. The sequence is that of Chaperonin GroEL 1 from Renibacterium salmoninarum (strain ATCC 33209 / DSM 20767 / JCM 11484 / NBRC 15589 / NCIMB 2235).